A 524-amino-acid polypeptide reads, in one-letter code: Bifunctional purine biosynthesis protein PurH (524 aa).

Residues 1–149 (MSDPLIKRAL…KNNESVTVLT (149 aa)) form the MGS-like domain.

Belongs to the PurH family.

The enzyme catalyses (6R)-10-formyltetrahydrofolate + 5-amino-1-(5-phospho-beta-D-ribosyl)imidazole-4-carboxamide = 5-formamido-1-(5-phospho-D-ribosyl)imidazole-4-carboxamide + (6S)-5,6,7,8-tetrahydrofolate. It catalyses the reaction IMP + H2O = 5-formamido-1-(5-phospho-D-ribosyl)imidazole-4-carboxamide. Its pathway is purine metabolism; IMP biosynthesis via de novo pathway; 5-formamido-1-(5-phospho-D-ribosyl)imidazole-4-carboxamide from 5-amino-1-(5-phospho-D-ribosyl)imidazole-4-carboxamide (10-formyl THF route): step 1/1. The protein operates within purine metabolism; IMP biosynthesis via de novo pathway; IMP from 5-formamido-1-(5-phospho-D-ribosyl)imidazole-4-carboxamide: step 1/1. This Chlorobium luteolum (strain DSM 273 / BCRC 81028 / 2530) (Pelodictyon luteolum) protein is Bifunctional purine biosynthesis protein PurH.